The sequence spans 243 residues: Vesicle-associated membrane protein-associated protein B (243 aa).

N-acetylalanine is present on alanine 2. The Cytoplasmic portion of the chain corresponds to 2–218; that stretch reads AKVEQVLSLE…PASAMAGKEE (217 aa). An MSP domain is found at 7–124; it reads VLSLEPQHEL…MDSKLRCVFE (118 aa). Serine 146 is modified (phosphoserine). Lysine 147 is covalently cross-linked (Glycyl lysine isopeptide (Lys-Gly) (interchain with G-Cter in SUMO1)). The residue at position 150 (threonine 150) is a Phosphothreonine. A phosphoserine mark is found at serine 158, serine 159, and serine 160. Residues 161–196 are a coiled coil; sequence LDDTEVKKVMEECKRLQSEVQRLREENKQFKEEDGL. Positions 186–197 are enriched in basic and acidic residues; the sequence is ENKQFKEEDGLR. The disordered stretch occupies residues 186–214; that stretch reads ENKQFKEEDGLRMRKTAQSNSPAPASAMA. The residue at position 206 (serine 206) is a Phosphoserine. A helical; Anchor for type IV membrane protein membrane pass occupies residues 219 to 239; the sequence is GLSTRLLALVVLFFIVGVIIG.

This sequence belongs to the VAMP-associated protein (VAP) (TC 9.B.17) family. As to quaternary structure, homodimer, and heterodimer with VAPA. Interacts with VAMP1 and VAMP2. Interacts (via MSP domain) with ZFYVE27. Interacts with RMDN3. Interacts with KIF5A in a ZFYVE27-dependent manner. Interacts (via MSP domain) with STARD3 (via phospho-FFAT motif). Interacts with STARD3NL (via FFAT motif). Interacts with CERT1. Interacts with PLEKHA3 and SACM1L to form a ternary complex. Interacts with VPS13A (via FFAT motif). Interacts with RB1CC1 (via phosphorylated FFAT motif), MIGA2 (via phosphorylated FFAT motif), RMDN3 (via phosphorylated FFAT motif), OSBPL1A (via FFAT motif), KCNB1 (via phosphorylated FFAT motif) and KCNB2 (via phosphorylated FFAT motif). Interacts (via MSP domain) with WDR44 (via FFAT motif); the interactions connect the endoplasmic reticulum (ER) with the endosomal tubule.

It is found in the endoplasmic reticulum membrane. Its function is as follows. Endoplasmic reticulum (ER)-anchored protein that mediates the formation of contact sites between the ER and endosomes via interaction with FFAT motif-containing proteins such as STARD3 or WDR44. Interacts with STARD3 in a FFAT motif phosphorylation dependent manner. Via interaction with WDR44 participates in neosynthesized protein export. Participates in the endoplasmic reticulum unfolded protein response (UPR) by inducing ERN1/IRE1 activity. Involved in cellular calcium homeostasis regulation. This chain is Vesicle-associated membrane protein-associated protein B, found in Bos taurus (Bovine).